The primary structure comprises 206 residues: dITP/XTP pyrophosphatase (206 aa).

Residue 7-12 (TSNKDK) participates in substrate binding. Catalysis depends on aspartate 74, which acts as the Proton acceptor. Aspartate 74 serves as a coordination point for Mg(2+). Residues serine 75, 159-162 (FGYD), lysine 182, and 187-188 (HR) contribute to the substrate site.

Belongs to the HAM1 NTPase family. In terms of assembly, homodimer. It depends on Mg(2+) as a cofactor.

The catalysed reaction is XTP + H2O = XMP + diphosphate + H(+). It carries out the reaction dITP + H2O = dIMP + diphosphate + H(+). It catalyses the reaction ITP + H2O = IMP + diphosphate + H(+). Pyrophosphatase that catalyzes the hydrolysis of nucleoside triphosphates to their monophosphate derivatives, with a high preference for the non-canonical purine nucleotides XTP (xanthosine triphosphate), dITP (deoxyinosine triphosphate) and ITP. Seems to function as a house-cleaning enzyme that removes non-canonical purine nucleotides from the nucleotide pool, thus preventing their incorporation into DNA/RNA and avoiding chromosomal lesions. The chain is dITP/XTP pyrophosphatase from Campylobacter hominis (strain ATCC BAA-381 / DSM 21671 / CCUG 45161 / LMG 19568 / NCTC 13146 / CH001A).